Reading from the N-terminus, the 391-residue chain is 3-ketoacyl-CoA thiolase (391 aa).

Cysteine 95 (acyl-thioester intermediate) is an active-site residue. Active-site proton acceptor residues include histidine 347 and cysteine 377.

The protein belongs to the thiolase-like superfamily. Thiolase family. As to quaternary structure, heterotetramer of two alpha chains (FadB) and two beta chains (FadA).

It localises to the cytoplasm. It catalyses the reaction an acyl-CoA + acetyl-CoA = a 3-oxoacyl-CoA + CoA. It participates in lipid metabolism; fatty acid beta-oxidation. Catalyzes the final step of fatty acid oxidation in which acetyl-CoA is released and the CoA ester of a fatty acid two carbons shorter is formed. The protein is 3-ketoacyl-CoA thiolase of Pseudomonas syringae pv. syringae (strain B728a).